The following is a 77-amino-acid chain: NADH-ubiquinone oxidoreductase chain 4L (77 aa).

2 helical membrane passes run Trp15–Ser37 and Met44–Val64.

Belongs to the complex I subunit 4L family.

It is found in the mitochondrion membrane. It carries out the reaction a ubiquinone + NADH + 5 H(+)(in) = a ubiquinol + NAD(+) + 4 H(+)(out). In terms of biological role, core subunit of the mitochondrial membrane respiratory chain NADH dehydrogenase (Complex I) that is believed to belong to the minimal assembly required for catalysis. Complex I functions in the transfer of electrons from NADH to the respiratory chain. The immediate electron acceptor for the enzyme is believed to be ubiquinone. The chain is NADH-ubiquinone oxidoreductase chain 4L from Caenorhabditis elegans.